The primary structure comprises 591 residues: Glucose-6-phosphate isomerase (591 aa).

Glu380 acts as the Proton donor in catalysis. Active-site residues include His411 and Lys540.

Belongs to the GPI family. In terms of assembly, homodimer.

The protein localises to the cytoplasm. It carries out the reaction alpha-D-glucose 6-phosphate = beta-D-fructose 6-phosphate. Its pathway is carbohydrate degradation; glycolysis; D-glyceraldehyde 3-phosphate and glycerone phosphate from D-glucose: step 2/4. This is Glucose-6-phosphate isomerase (GGI.R1) from Plasmodium falciparum.